The chain runs to 974 residues: Translation initiation factor IF-2 (974 aa).

Residues 31 to 376 (FVKSASSTVE…APAVGGVRLP (346 aa)) are disordered. Over residues 52 to 68 (PSAKSADSAARPAAKPG) the composition is skewed to low complexity. The segment covering 83-96 (GPRPGPKPAAPAPA) has biased composition (pro residues). Residues 97–133 (APAAAAPAATPAAQAPAPAAPAASTATPAAPASNAPK) are compositionally biased toward low complexity. Residues 134 to 147 (PGRPTPAAPAPAAP) are compositionally biased toward pro residues. 2 stretches are compositionally biased toward low complexity: residues 148-166 (AAPAAPAAASTPAAPSTGA) and 179-191 (RVGNNPYSSAPAE). Composition is skewed to pro residues over residues 195–210 (PRPAPGAPRPGAPRPA) and 253–266 (RPSPGSMPPRPNPG). The segment covering 267–277 (AMPARSARPAP) has biased composition (low complexity). Positions 279–332 (GRPGRPGGAPGGRPGGGGGGYRGGGAPGAGAGAPGGGAPAGGFRGRPGGGGRPG) are enriched in gly residues. Positions 349–358 (RRGRKSKRQK) are enriched in basic residues. The tr-type G domain maps to 470–641 (SRPPVVTVMG…AVLLTADAAL (172 aa)). The segment at 479–486 (GHVDHGKT) is G1. Residue 479–486 (GHVDHGKT) participates in GTP binding. A G2 region spans residues 504 to 508 (GITQH). Residues 529–532 (DTPG) form a G3 region. Residues 529-533 (DTPGH) and 583-586 (NKID) each bind GTP. Residues 583–586 (NKID) are G4. Residues 619–621 (SAK) are G5.

It belongs to the TRAFAC class translation factor GTPase superfamily. Classic translation factor GTPase family. IF-2 subfamily.

The protein localises to the cytoplasm. One of the essential components for the initiation of protein synthesis. Protects formylmethionyl-tRNA from spontaneous hydrolysis and promotes its binding to the 30S ribosomal subunits. Also involved in the hydrolysis of GTP during the formation of the 70S ribosomal complex. This is Translation initiation factor IF-2 from Rhodococcus opacus (strain B4).